Consider the following 386-residue polypeptide: Transcription factor GTE1 (386 aa).

2 disordered regions span residues 66–106 and 340–386; these read GAAQ…KHVS and ANKS…AKKA. Positions 68-78 are enriched in polar residues; sequence AQTNTSKSNSG. A Bromo domain is found at 105-211; it reads VSSPDLMRQF…EKFEEKWLLI (107 aa). Positions 263–344 constitute an NET domain; that stretch reads RESVVQRCRK…EALKAANKSS (82 aa). Positions 345-358 are enriched in low complexity; it reads GGTNAQNNNNTGTG.

Barely detectable in stems, leaves, siliques, and dry seeds, but was present at considerable levels in roots, flowers and imbibited seeds.

The protein resides in the nucleus. Its function is as follows. Transcription activator that plays a role in the promotion of seed germination by both negatively and positively regulating the abscisic acid (ABA) and phytochrome A (phyA) transduction pathways, respectively. The sequence is that of Transcription factor GTE1 (GTE1) from Arabidopsis thaliana (Mouse-ear cress).